We begin with the raw amino-acid sequence, 161 residues long: MRHAKSSYPRGFPDHIADHDRRLAPRGVREASLAGGWLRTNVPAIEKVLCSTAMRARETLTHSGIEAPVRYTERLYRADPDTVIKEIKAISDEVTTSLIVSHEPTISAVALALTGSGTNNDAAQRISTKFPTSGIAVLNVAGRWQHLELESAELVAFHVPR.

This sequence belongs to the SixA phosphatase family.

This is an uncharacterized protein from Mycobacterium leprae (strain TN).